A 627-amino-acid polypeptide reads, in one-letter code: 1-deoxy-D-xylulose-5-phosphate synthase (627 aa).

Thiamine diphosphate-binding positions include His74 and 115–117 (GHA). Asp146 contacts Mg(2+). Residues 147–148 (AA), Asn175, Phe284, and Glu364 contribute to the thiamine diphosphate site. Asn175 contacts Mg(2+).

The protein belongs to the transketolase family. DXPS subfamily. Homodimer. It depends on Mg(2+) as a cofactor. Requires thiamine diphosphate as cofactor.

The catalysed reaction is D-glyceraldehyde 3-phosphate + pyruvate + H(+) = 1-deoxy-D-xylulose 5-phosphate + CO2. Its pathway is metabolic intermediate biosynthesis; 1-deoxy-D-xylulose 5-phosphate biosynthesis; 1-deoxy-D-xylulose 5-phosphate from D-glyceraldehyde 3-phosphate and pyruvate: step 1/1. Catalyzes the acyloin condensation reaction between C atoms 2 and 3 of pyruvate and glyceraldehyde 3-phosphate to yield 1-deoxy-D-xylulose-5-phosphate (DXP). In Acidobacterium capsulatum (strain ATCC 51196 / DSM 11244 / BCRC 80197 / JCM 7670 / NBRC 15755 / NCIMB 13165 / 161), this protein is 1-deoxy-D-xylulose-5-phosphate synthase.